The following is a 369-amino-acid chain: Dehydrogenase pigH (369 aa).

The Enoyl reductase (ER) domain occupies 13-367 (KAPLLEVKAA…QGVSAKKIVV (355 aa)). 44-49 (IDWLIQ) contacts NADP(+). N-linked (GlcNAc...) asparagine glycans are attached at residues Asn-79 and Asn-101. NADP(+) contacts are provided by residues 197–200 (SRKN) and Tyr-215. The chain crosses the membrane as a helical span at residues 280-300 (TIIFFVSWIISFKFKGLLKGI). 360–361 (VS) lines the NADP(+) pocket.

The protein belongs to the zinc-containing alcohol dehydrogenase family.

Its subcellular location is the membrane. The protein operates within secondary metabolite biosynthesis. In terms of biological role, dehydrogenase; part of the gene cluster that mediates the biosynthesis of azaphilone pigments (MonAzPs), a complex mixture of compounds with a common azaphilone skeleton very widely used as food colorants. Within the pathway, pigH might be involved in the late steps of yellow pigments monascin and ankaflavin biosynthesis. The first step of the pathway is performed by the nrPKS pigA that forms the hexaketide precursor from successive condensations of five malonyl-CoA units, with a simple acetyl-CoA starter unit. The role of esterase pigG is not clear, but it may play at most a supplementary role in the formation of the benzaldehyde produced by the pigA nrPKS. This very reactive benzaldehyde is intercepted by the pigC ketoreductase that to provide the first stable enzyme-free MonAzPs intermediate, 6-(4-hydroxy-2-oxopentyl)-3-methyl-2,4-dioxocyclohexane carbaldehyde, also known as M7PKS-1. The FAD-dependent monooxygenase pigN hydroxylates M7PKS-1 at C-4, which triggers the formation of the pyran ring. PigJ, pigK and pigD are involved in the acetylation of the pyran ring. PigJ and pigK form the two subunits of a dedicated fungal FAS that produces the side chain fatty acyl moiety of MonAzPs and pigD transfers the fatty acyl chain to the C-4 alcohol. PigM and pigO are involved in the elimination of the omega-1 alcohol. PigM acts as an O-acetyltransferase that synthesizes the putative O-11 acetyl intermediate whereas pigO eliminates acetic acid to yield an intermediate with a C10(11) double bond. The dehydration of the C-11 alcohol followed by the reduction of the C6(7) double bond by the NAD(P)H-dependent oxidoreductase pigE increases the electrophilicity of the C-5 ketone of the resulting acyl benzopyran. This in turn sets up the C-5 ketone for an intramolecular Knoevenagel aldol condensation with the C-20 enol of the side chain. This condensation affords the characteristic linear tricyclic carbon skeletons of the yellow pigments that serve as the common precursors for the classical yellow pigments monascin and ankaflavin, orange pigments rubopunctatin and monascorubrin, and red pigments ribropunctamine and monascorubramine. The FAD-dependent oxidoreductase pigF is especially invoved in the biosynthesis of orange and red pigments via desaturation of C6(7). In Monascus ruber (Mold), this protein is Dehydrogenase pigH.